We begin with the raw amino-acid sequence, 1182 residues long: Intraflagellar transport protein 122 homolog (1182 aa).

WD repeat units lie at residues 10 to 50 (KAEQ…QPLK), 51 to 91 (GHKD…LKYT), 93 to 129 (NDSI…VSKH), 131 to 169 (SSSK…KVKI), 174 to 217 (GSLS…IGKD), 219 to 258 (PLNF…LGTV), 260 to 300 (EQNS…HGLY), and 453 to 492 (KQAT…LLFQ).

Component of the IFT complex A (IFT-A) complex. IFT-A complex is divided into a core subcomplex composed of IFT122:IFT140:WDR19 which is associated with TULP3 and a peripheral subcomplex composed of IFT43:WDR35:TTC21B. Interacts with IFT43:WDR35; the interaction connects the 2 IFT-A subcomplexes. Interacts with IFTAP; the interaction associates IFTAP with IFT-A complex.

It localises to the cell projection. Its subcellular location is the cilium. The protein resides in the cytoplasm. The protein localises to the cytoskeleton. It is found in the cilium basal body. Its function is as follows. As a component of the IFT complex A (IFT-A), a complex required for retrograde ciliary transport and entry into cilia of G protein-coupled receptors (GPCRs), it is required in ciliogenesis and ciliary protein trafficking. Involved in cilia formation during neuronal patterning. Acts as a negative regulator of Shh signaling. Required to recruit TULP3 to primary cilia. This is Intraflagellar transport protein 122 homolog from Mus musculus (Mouse).